We begin with the raw amino-acid sequence, 91 residues long: MKLTITLALVTLALLCSPASAGICPGFAHVIENLLLGTPSSYETSLKEFQPDDAMKDAGMQMKKVLDTLPQTTRENIIKLTEKIVKSPLCM.

The first 21 residues, 1-21 (MKLTITLALVTLALLCSPASA), serve as a signal peptide directing secretion.

This sequence belongs to the secretoglobin family. As to quaternary structure, antiparallel homodimer; disulfide-linked. Interaction with LMBR1L is controversial.

The protein localises to the secreted. In terms of biological role, uteroglobin binds progesterone specifically and with high affinity. It may regulate progesterone concentrations reaching the blastocyst. It is also a potent inhibitor of phospholipase A2. The protein is Uteroglobin (SCGB1A1) of Lepus capensis (Brown hare).